Here is a 152-residue protein sequence, read N- to C-terminus: UPF0178 protein KPK_4355 (152 aa).

It belongs to the UPF0178 family.

The protein is UPF0178 protein KPK_4355 of Klebsiella pneumoniae (strain 342).